The primary structure comprises 146 residues: Ribosome maturation factor RimP (146 aa).

Belongs to the RimP family.

It localises to the cytoplasm. Its function is as follows. Required for maturation of 30S ribosomal subunits. This chain is Ribosome maturation factor RimP, found in Helicobacter pylori (strain ATCC 700392 / 26695) (Campylobacter pylori).